Reading from the N-terminus, the 1290-residue chain is Nonribosomal peptide synthetase 6 (1290 aa).

The interval 1–27 (MTAIDVPWLSTPRRDNSHGTRSNSSCQ) is disordered. An adenylation region spans residues 260–657 (SYQELDCQAS…AQVEHHLRSC (398 aa)). The Carrier domain maps to 775–851 (APETELERKL…GLAQTHRHPV (77 aa)). Ser812 is subject to O-(pantetheine 4'-phosphoryl)serine. The tract at residues 846–870 (THRHPVRRAEVPRSSHDPDPFGRVR) is disordered. Residues 852–870 (RRAEVPRSSHDPDPFGRVR) show a composition bias toward basic and acidic residues. Residues 914 to 1162 (GGQLDPEQLR…PCMNIIPVRV (249 aa)) form a condensation region.

Belongs to the NRP synthetase family.

Functionally, nonribosomal peptide synthesis (NRPS) is a key mechanism responsible for the biosynthesis of bioactive metabolites which are potentially contributing to organismal virulence. This chain is Nonribosomal peptide synthetase 6 (NRPS6), found in Aspergillus fumigatus (strain ATCC MYA-4609 / CBS 101355 / FGSC A1100 / Af293) (Neosartorya fumigata).